The chain runs to 319 residues: Serine/threonine-protein phosphatase PP1 isozyme 2 (319 aa).

The Mn(2+) site is built by Asp-61, His-63, Asp-89, and Asn-121. The active-site Proton donor is His-122. The Mn(2+) site is built by His-170 and His-245.

This sequence belongs to the PPP phosphatase family. PP-1 subfamily. Mn(2+) serves as cofactor.

It carries out the reaction O-phospho-L-seryl-[protein] + H2O = L-seryl-[protein] + phosphate. The enzyme catalyses O-phospho-L-threonyl-[protein] + H2O = L-threonyl-[protein] + phosphate. The sequence is that of Serine/threonine-protein phosphatase PP1 isozyme 2 from Acetabularia peniculus (Green alga).